Consider the following 370-residue polypeptide: Spermidine/putrescine import ATP-binding protein PotA (370 aa).

One can recognise an ABC transporter domain in the interval 6-236 (IELHQVTKRY…PINHFVADFI (231 aa)). An ATP-binding site is contributed by 38-45 (GPSGCGKT).

This sequence belongs to the ABC transporter superfamily. Spermidine/putrescine importer (TC 3.A.1.11.1) family. As to quaternary structure, the complex is composed of two ATP-binding proteins (PotA), two transmembrane proteins (PotB and PotC) and a solute-binding protein (PotD).

It is found in the cell membrane. It carries out the reaction ATP + H2O + polyamine-[polyamine-binding protein]Side 1 = ADP + phosphate + polyamineSide 2 + [polyamine-binding protein]Side 1.. Part of the ABC transporter complex PotABCD involved in spermidine/putrescine import. Responsible for energy coupling to the transport system. This chain is Spermidine/putrescine import ATP-binding protein PotA, found in Levilactobacillus brevis (strain ATCC 367 / BCRC 12310 / CIP 105137 / JCM 1170 / LMG 11437 / NCIMB 947 / NCTC 947) (Lactobacillus brevis).